A 757-amino-acid chain; its full sequence is Exo-alpha-(1-&gt;6)-L-arabinopyranosidase (757 aa).

Residue Asp232 is part of the active site.

The protein belongs to the glycosyl hydrolase 3 family. As to quaternary structure, homotetramer.

Its activity is regulated as follows. Completely inhibited by Cu(2+) and Fe(2+). Functionally, catalyzes the hydrolysis of a non-reducing terminal alpha-L-arabinopyranosidic linkage in ginsenoside Rb2 (alpha-L-arabinopyranosyl-(1-&gt;6)-alpha-D-glucopyranosyl) to release alpha-D-glucopyranosyl (Rd). It is not able to hydrolyze alpha-L-arabinofuranosyl-(1-&gt;6)-alpha-D-glucopyranosyl (Rc). This Bifidobacterium breve (strain ACS-071-V-Sch8b) protein is Exo-alpha-(1-&gt;6)-L-arabinopyranosidase.